Reading from the N-terminus, the 362-residue chain is Phosphoserine aminotransferase (362 aa).

L-glutamate-binding residues include Ser-9 and Arg-42. Pyridoxal 5'-phosphate contacts are provided by residues 76–77 (GR), Trp-102, Thr-153, Asp-174, and Gln-197. Residue Lys-198 is modified to N6-(pyridoxal phosphate)lysine. 239-240 (NT) contributes to the pyridoxal 5'-phosphate binding site.

The protein belongs to the class-V pyridoxal-phosphate-dependent aminotransferase family. SerC subfamily. In terms of assembly, homodimer. Requires pyridoxal 5'-phosphate as cofactor.

Its subcellular location is the cytoplasm. The enzyme catalyses O-phospho-L-serine + 2-oxoglutarate = 3-phosphooxypyruvate + L-glutamate. It carries out the reaction 4-(phosphooxy)-L-threonine + 2-oxoglutarate = (R)-3-hydroxy-2-oxo-4-phosphooxybutanoate + L-glutamate. It functions in the pathway amino-acid biosynthesis; L-serine biosynthesis; L-serine from 3-phospho-D-glycerate: step 2/3. It participates in cofactor biosynthesis; pyridoxine 5'-phosphate biosynthesis; pyridoxine 5'-phosphate from D-erythrose 4-phosphate: step 3/5. In terms of biological role, catalyzes the reversible conversion of 3-phosphohydroxypyruvate to phosphoserine and of 3-hydroxy-2-oxo-4-phosphonooxybutanoate to phosphohydroxythreonine. This Salmonella agona (strain SL483) protein is Phosphoserine aminotransferase.